The following is a 2776-amino-acid chain: A-kinase anchor protein 13 (2776 aa).

11 disordered regions span residues K371 to Q401, E452 to T518, P547 to P584, T618 to S641, E653 to M689, V760 to A871, A910 to L951, G995 to G1029, L1431 to I1508, P1527 to N1546, and R1565 to E1603. Residues D389–Q401 show a composition bias toward polar residues. An important for interaction with PRKAR2A region spans residues Q493 to T515. Positions P560–C573 are enriched in basic and acidic residues. Positions A659–G672 are enriched in polar residues. Positions S773 to E788 are enriched in low complexity. S784 is modified (phosphoserine). Residue T809 is modified to Phosphothreonine. 2 stretches are compositionally biased toward basic and acidic residues: residues D820 to G834 and D914 to R940. T941 bears the Phosphothreonine mark. Residues T1005–Q1020 show a composition bias toward polar residues. Over residues D1433–T1444 the composition is skewed to low complexity. Residues G1454–G1476 show a composition bias toward polar residues. Residues S1455, S1473, S1507, S1532, and S1569 each carry the phosphoserine modification. The interval R1552–N1678 is important for interaction with MAP2K3. Residues S1583–S1594 are compositionally biased toward low complexity. Residues S1608, S1611, and S1613 each carry the phosphoserine modification. Residue K1637 is modified to N6-methyllysine. The segment at T1711 to T1756 is disordered. Positions K1724–T1751 are enriched in basic and acidic residues. A Phorbol-ester/DAG-type zinc finger spans residues G1754–C1801. 3 positions are modified to phosphoserine: S1839, S1858, and S1892. The interaction with ESR1 stretch occupies residues M1882 to C2776. At T1893 the chain carries Phosphothreonine. A phosphoserine mark is found at S1895 and S1908. The DH domain maps to K1957 to K2154. The PH domain maps to K2194–N2296. Residues S2308 and S2361 each carry the phosphoserine modification. The stretch at S2308–I2345 forms a coiled coil. Residue T2431 is modified to Phosphothreonine. Residues D2436 to N2471 are disordered. The segment covering Q2455–L2466 has biased composition (basic and acidic residues). A phosphoserine mark is found at S2527 and S2530. Residues L2532–Q2646 adopt a coiled-coil conformation. 2 disordered regions span residues A2549–Q2605 and E2626–C2776. 2 stretches are compositionally biased toward basic and acidic residues: residues H2558–Q2605 and E2626–S2640. Composition is skewed to polar residues over residues Q2641–N2653, L2665–R2700, and S2713–P2727. 2 positions are modified to phosphoserine: S2673 and S2692.

Interacts with the cAMP-dependent protein kinase (PKA) holoenzyme and with the regulatory subunit PRKAR2A. Interacts with RHOA. Also interacts with RHOB and RHOC. Identified in a ternary complex with RHOA and PRKAR2A. Identified in a complex with NR3C1 and RHOA. Interacts with BRAF and KSR1. Identified in a complex with BRAF and KSR1. Component of a signaling complex containing at least AKAP13, PKN1, MAPK14, ZAK and MAP2K3. Within this complex, AKAP13 interacts directly with PKN1, which in turn recruits MAPK14, MAP2K3 and ZAK. Interacts (phosphorylated form) with YWHAB and YWHAZ. Interaction with YWHAB inhibits activation of RHOA, interferes with PKN1 binding and activation of MAP kinases. Interacts with GNA12. Interacts with IKBKB. Interacts with ESR1, THRA, PPARA and NME2. Interacts (via the C-terminal domain after the PH domain) with MEF2C and RXRB. Interacts (via the C-terminal domain after the PH domain) with PRKD1. In terms of tissue distribution, detected in embryonic heart, limb bud, first branchial arch and forebrain (at protein level). Detected in heart. Detected in perichondrium, but not in the bone growth plate.

Its subcellular location is the cytoplasm. The protein resides in the cytosol. It is found in the cell cortex. The protein localises to the cytoskeleton. It localises to the nucleus. Its subcellular location is the membrane. In terms of biological role, scaffold protein that plays an important role in assembling signaling complexes downstream of several types of G protein-coupled receptors. Activates RHOA in response to signaling via G protein-coupled receptors via its function as Rho guanine nucleotide exchange factor. May also activate other Rho family members. Part of a kinase signaling complex that links ADRA1A and ADRA1B adrenergic receptor signaling to the activation of downstream p38 MAP kinases, such as MAPK11 and MAPK14. Part of a signaling complex that links ADRA1B signaling to the activation of RHOA and IKBKB/IKKB, leading to increased NF-kappa-B transcriptional activity. Part of a RHOA-dependent signaling cascade that mediates responses to lysophosphatidic acid (LPA), a signaling molecule that activates G-protein coupled receptors and potentiates transcriptional activation of the glucocorticoid receptor NR3C1. Part of a signaling cascade that stimulates MEF2C-dependent gene expression in response to lysophosphatidic acid (LPA). Part of a signaling pathway that activates MAPK11 and/or MAPK14 and leads to increased transcription activation of the estrogen receptors ESR1 and ESR2. Part of a signaling cascade that links cAMP and EGFR signaling to BRAF signaling and to PKA-mediated phosphorylation of KSR1, leading to the activation of downstream MAP kinases, such as MAPK1 or MAPK3. Functions as a scaffold protein that anchors cAMP-dependent protein kinase (PKA) and PRKD1. This promotes activation of PRKD1, leading to increased phosphorylation of HDAC5 and ultimately cardiomyocyte hypertrophy. Has no guanine nucleotide exchange activity on CDC42, Ras or Rac. Required for normal embryonic heart development, and in particular for normal sarcomere formation in the developing cardiomyocytes. Plays a role in cardiomyocyte growth and cardiac hypertrophy in response to activation of the beta-adrenergic receptor by phenylephrine or isoproterenol. Required for normal adaptive cardiac hypertrophy in response to pressure overload. Plays a role in osteogenesis. The polypeptide is A-kinase anchor protein 13 (Mus musculus (Mouse)).